The sequence spans 374 residues: Tryptophan--tRNA ligase (374 aa).

Positions 71–79 (PSGRMHLGH) match the 'HIGH' region motif. The 'KMSKS' region motif lies at 247–251 (KMSSS).

It belongs to the class-I aminoacyl-tRNA synthetase family.

Its subcellular location is the cytoplasm. It carries out the reaction tRNA(Trp) + L-tryptophan + ATP = L-tryptophyl-tRNA(Trp) + AMP + diphosphate + H(+). In Methanopyrus kandleri (strain AV19 / DSM 6324 / JCM 9639 / NBRC 100938), this protein is Tryptophan--tRNA ligase.